The following is a 406-amino-acid chain: Arginine decarboxylase (406 aa).

N6-(pyridoxal phosphate)lysine is present on K8. 192-202 contributes to the substrate binding site; sequence VDFGGGLGIDY.

It belongs to the Orn/Lys/Arg decarboxylase class-II family. SpeA subfamily. Pyridoxal 5'-phosphate serves as cofactor. Mg(2+) is required as a cofactor.

The catalysed reaction is L-arginine + H(+) = agmatine + CO2. Its pathway is amine and polyamine biosynthesis; agmatine biosynthesis; agmatine from L-arginine: step 1/1. This chain is Arginine decarboxylase (SPE2), found in Theobroma cacao (Cacao).